The chain runs to 558 residues: Glypican-1 (558 aa).

The first 23 residues, 1-23 (MELRARGWWLLCAAAALVACARG), serve as a signal peptide directing secretion. Intrachain disulfides connect Cys-32–Cys-68, Cys-62–Cys-256, Cys-69–Cys-259, Cys-191–Cys-343, Cys-246–Cys-279, Cys-268–Cys-415, and Cys-272–Cys-401. Residues Asn-79 and Asn-116 are each glycosylated (N-linked (GlcNAc...) asparagine). Positions 341–374 (QGCGNPKVNPQGPGPEEKRRRGKLAPRERPPSGT) are disordered. Residues 355–370 (PEEKRRRGKLAPRERP) are compositionally biased toward basic and acidic residues. O-linked (Xyl...) (heparan sulfate) serine glycosylation is found at Ser-486, Ser-488, and Ser-490. Residues 505–534 (RKSSSSRTPLTHALPGLSEQEGQKTSAASC) are disordered. A lipid anchor (GPI-anchor amidated serine) is attached at Ser-530. Residues 531 to 558 (AASCPQPPTFLLPLLLFLALTVARPRWR) constitute a propeptide, removed in mature form.

It belongs to the glypican family. S-nitrosylated in a Cu(2+)-dependent manner. Nitric acid (NO) is released from the nitrosylated cysteines by ascorbate or by some other reducing agent, in a Cu(2+) or Zn(2+) dependent manner. This free nitric oxide is then capable of cleaving the heparan sulfate side chains. Post-translationally, N- and O-glycosylated. N-glycosylation is mainly of the complex type containing sialic acid. O-glycosylated with heparan sulfate. The heparan sulfate chains can be cleaved either by the action of heparanase or, degraded by a deaminative process that uses nitric oxide (NO) released from the S-nitrosylated cysteines. This process is triggered by ascorbate, or by some other reducing agent, in a Cu(2+)- or Zn(2+) dependent manner. Cu(2+) ions are provided by ceruloproteins such as APP, PRNP or CP which associate with GCP1 in intracellular compartments or lipid rafts. In terms of processing, this cell-associated glypican is further processed to give rise to a medium-released species.

The protein localises to the cell membrane. Its subcellular location is the endosome. The protein resides in the secreted. It is found in the extracellular space. Cell surface proteoglycan that bears heparan sulfate. Binds, via the heparan sulfate side chains, alpha-4 (V) collagen and participates in Schwann cell myelination. May act as a catalyst in increasing the rate of conversion of prion protein PRPN(C) to PRNP(Sc) via associating (via the heparan sulfate side chains) with both forms of PRPN, targeting them to lipid rafts and facilitating their interaction. Required for proper skeletal muscle differentiation by sequestering FGF2 in lipid rafts preventing its binding to receptors (FGFRs) and inhibiting the FGF-mediated signaling. This chain is Glypican-1 (GPC1), found in Homo sapiens (Human).